The primary structure comprises 420 residues: MALLFGIGYVLIIFEESLSFSKSGIALLMAVSLWVVRSIETSVEIVTLELQHATSEVSQIVFYMLGAMTIVEIIDAHQGFKLVTDCITSRKPKILLWVIGFATFFLSSVLDNLTSTIVMVSLLRRLIPPSEYRKLLGAVVVIAANAGGAWTPIGDVTTTMLWIHGHISTFSTIKNLFLPSAISLVVPLALMSLTSEVHGMGLNTPPTPLLAYDRSAPRGKLVFGVGFGALLFVPLFKSLTGLPPYMGILLGLGVIWILTDVIHYGDLERQHLKLPHALSRIDSQGALFFLGILLSMSSLDAAGILKVIANYLDAHIANVELIASIIGVVSAIIDNVPLVAATMGMYDLSTFPQDSEFWQLISFCAGTGGSMLITGSAAGVIFMSMEKVNFFWYFRKVSGFAFAGFTAGIMTYLAVHNFPL.

11 helical membrane passes run 25–45 (IALL…SVEI), 60–80 (IVFY…HQGF), 94–114 (ILLW…DNLT), 136–156 (LGAV…IGDV), 173–193 (IKNL…LMSL), 221–241 (LVFG…SLTG), 242–262 (LPPY…TDVI), 285–305 (GALF…AGIL), 321–341 (LIAS…LVAA), 363–383 (FCAG…VIFM), and 400–420 (FAFA…NFPL).

This sequence belongs to the NhaD Na(+)/H(+) (TC 2.A.62) antiporter family.

The protein resides in the membrane. Na(+)/H(+) antiporter that extrudes sodium in exchange for external protons. This is Sodium/proton antiporter 2 from Arabidopsis thaliana (Mouse-ear cress).